The following is a 537-amino-acid chain: 4-coumarate--CoA ligase (537 aa).

Residues serine 189, serine 190, glycine 191, threonine 192, threonine 193, and lysine 197 each contribute to the ATP site. The (E)-4-coumaroyl-AMP site is built by tyrosine 239 and serine 243. Lysine 260 contacts CoA. Residues asparagine 262–glutamine 331 form an SBD1 region. Residues alanine 309, glutamine 331, glycine 332, threonine 336, and methionine 344 each contribute to the (E)-4-coumaroyl-AMP site. The ATP site is built by glutamine 331, glycine 332, and threonine 336. Positions glycine 332–tyrosine 399 are SBD2. 2 residues coordinate ATP: aspartate 420 and arginine 435. Residues lysine 437 and lysine 441 each coordinate (E)-4-coumaroyl-AMP. Residues lysine 443 and glycine 444 each contribute to the CoA site. Lysine 524 lines the ATP pocket.

It belongs to the ATP-dependent AMP-binding enzyme family. Mg(2+) is required as a cofactor.

The catalysed reaction is (E)-4-coumarate + ATP + CoA = (E)-4-coumaroyl-CoA + AMP + diphosphate. It catalyses the reaction (E)-4-coumarate + ATP + H(+) = (E)-4-coumaroyl-AMP + diphosphate. It carries out the reaction (E)-4-coumaroyl-AMP + CoA = (E)-4-coumaroyl-CoA + AMP + H(+). Its pathway is phytoalexin biosynthesis; 3,4',5-trihydroxystilbene biosynthesis; 3,4',5-trihydroxystilbene from trans-4-coumarate: step 1/2. Carboxylate--CoA ligase that may use 4-coumarate as substrate. Follows a two-step reaction mechanism, wherein the carboxylate substrate first undergoes adenylation by ATP, followed by a thioesterification in the presence of CoA to yield the final CoA thioester. This Pinus taeda (Loblolly pine) protein is 4-coumarate--CoA ligase (4CL).